The sequence spans 620 residues: Estrogen receptor (620 aa).

Polar residues-rich tracts occupy residues 1–10 and 101–111; these read MSKRQSSVQI and GSLQSLGSGPT. Disordered stretches follow at residues 1-55 and 88-111; these read MSKR…RGSG and YSAP…SGPT. A modulating region spans residues 1–185; sequence MSKRQSSVQI…GFEMAKDTRF (185 aa). 2 consecutive NR C4-type zinc fingers follow at residues 186 to 206 and 222 to 246; these read CAVC…CEGC and CPAT…LRKC. The segment at residues 186-251 is a DNA-binding region (nuclear receptor); the sequence is CAVCSDYASG…RLRKCYEVGM (66 aa). Positions 252-314 are hinge; sequence MKGGVRKDRI…GGGRLSVTSI (63 aa). Positions 286-308 are disordered; that stretch reads KTVHYDGRKRSSTGGGGGGGGGR. Gly residues predominate over residues 298-308; it reads TGGGGGGGGGR. In terms of domain architecture, NR LBD spans 315–551; sequence PPEQVLLLLQ…DLLLEMLDAH (237 aa). A disordered region spans residues 558-620; sequence RAPQSLSQVD…RPDCTPALQD (63 aa).

This sequence belongs to the nuclear hormone receptor family. NR3 subfamily. As to quaternary structure, binds DNA as a homodimer. Can form a heterodimer with ER-beta. In terms of tissue distribution, widely expressed in brain, ovary, testis, and female liver.

Its subcellular location is the nucleus. Functionally, the steroid hormones and their receptors are involved in the regulation of eukaryotic gene expression and affect cellular proliferation and differentiation in target tissues. The sequence is that of Estrogen receptor (esr1) from Oryzias latipes (Japanese rice fish).